The following is a 337-amino-acid chain: Formamidase (337 aa).

One can recognise a CN hydrolase domain in the interval 14–257 (VVIGLVQLQL…DEIITAEVRP (244 aa)). The active-site Proton acceptor is Glu-60. Catalysis depends on Lys-129, which acts as the Proton donor. The Nucleophile role is filled by Cys-162.

It belongs to the carbon-nitrogen hydrolase superfamily. Aliphatic amidase family.

It carries out the reaction formamide + H2O = formate + NH4(+). Functionally, is an aliphatic amidase with a restricted substrate specificity, as it only hydrolyzes formamide. This Bradyrhizobium sp. (strain ORS 278) protein is Formamidase.